The sequence spans 631 residues: uncharacterized protein (631 aa).

9 consecutive transmembrane segments (helical) span residues Val-42–Phe-62, Ala-76–Leu-96, Val-106–Pro-128, Ala-152–Trp-172, Ala-344–Ala-364, Ser-366–Leu-386, Ile-398–Phe-418, Met-429–Ile-449, and Ile-464–Leu-484.

The protein belongs to the YccS/YhfK family.

It is found in the cell membrane. This is an uncharacterized protein from Bacillus subtilis (strain 168).